Here is a 23-residue protein sequence, read N- to C-terminus: Coenzyme PQQ synthesis protein A (23 aa).

Residues 15–19 (EVTLY) constitute a cross-link (pyrroloquinoline quinone (Glu-Tyr)).

The protein belongs to the PqqA family.

Its pathway is cofactor biosynthesis; pyrroloquinoline quinone biosynthesis. Its function is as follows. Required for coenzyme pyrroloquinoline quinone (PQQ) biosynthesis. PQQ is probably formed by cross-linking a specific glutamate to a specific tyrosine residue and excising these residues from the peptide. The protein is Coenzyme PQQ synthesis protein A of Klebsiella pneumoniae (strain 342).